Consider the following 249-residue polypeptide: DNA repair protein RecO (249 aa).

This sequence belongs to the RecO family.

In terms of biological role, involved in DNA repair and RecF pathway recombination. The sequence is that of DNA repair protein RecO from Mycoplasma mycoides subsp. mycoides SC (strain CCUG 32753 / NCTC 10114 / PG1).